The following is a 142-amino-acid chain: Glycine-rich RNA-binding protein 1 (142 aa).

Residues 1–65 enclose the RRM domain; it reads NSLHSAFSTY…RNITVNEAQS (65 aa). The interval 48–101 is disordered; that stretch reads MNGKELDGRNITVNEAQSRGGRGGGGGGGYGGGRGGGGGYGRRDGGGGGYGGGG. Positions 67–101 are enriched in gly residues; that stretch reads GGRGGGGGGGYGGGRGGGGGYGRRDGGGGGYGGGG.

Functionally, possibly has a role in RNA transcription or processing during stress. The chain is Glycine-rich RNA-binding protein 1 (GRP1) from Sorghum bicolor (Sorghum).